Reading from the N-terminus, the 451-residue chain is uncharacterized protein (451 aa).

The disordered stretch occupies residues Ala415–Asn435.

The protein belongs to the Rv1128c/1148c/1588c/1702c/1945/3466 family.

This is an uncharacterized protein from Mycobacterium tuberculosis (strain ATCC 25618 / H37Rv).